The following is a 269-amino-acid chain: MDKYAVFGNPIKHSKSPFIHTLFARQTMQDLEYSAIEAPINGFVESVTAFFSQQGKGCNVTVPFKEEAFQFADQLTERAKLAGAVNTLKKLDDGIILGDNTDGEGLVQDLLQYQVPLEDKHILLIGAGGAARGVILPLLKQNPASITLVNRTYEKAKQLAELFSPYGRIEAKKMSDINKGFDVIINSTSASLSGELPQIDPVIFSGGAISYDMMYGSGKTIFNQWALKNDAYQAYDGLGMLVGQAAESFTVWRGLRPGSKQILRELRKT.

Shikimate-binding positions include 14–16 (SKS) and T61. The active-site Proton acceptor is the K65. Residue E77 participates in NADP(+) binding. Shikimate-binding residues include N86 and D102. NADP(+) is bound by residues 126-130 (GAGGA), 150-155 (NRTYEK), and M213. Y215 is a shikimate binding site. An NADP(+)-binding site is contributed by G237.

Belongs to the shikimate dehydrogenase family. As to quaternary structure, homodimer.

It catalyses the reaction shikimate + NADP(+) = 3-dehydroshikimate + NADPH + H(+). It participates in metabolic intermediate biosynthesis; chorismate biosynthesis; chorismate from D-erythrose 4-phosphate and phosphoenolpyruvate: step 4/7. In terms of biological role, involved in the biosynthesis of the chorismate, which leads to the biosynthesis of aromatic amino acids. Catalyzes the reversible NADPH linked reduction of 3-dehydroshikimate (DHSA) to yield shikimate (SA). This chain is Shikimate dehydrogenase (NADP(+)), found in Aliivibrio fischeri (strain ATCC 700601 / ES114) (Vibrio fischeri).